The primary structure comprises 427 residues: Probable transcription factor At5g28040 (427 aa).

The interval 1–81 (MASDQRDTDF…APATKSSSGT (81 aa)) is disordered. The residue at position 14 (Ser-14) is a Phosphoserine. Residues 22-32 (GGGGGGRGGGE) show a composition bias toward gly residues. Positions 33–62 (TESDEDVVIPEPNEAEDDDHDPDPDPEYED) are enriched in acidic residues.

It belongs to the GeBP family.

The polypeptide is Probable transcription factor At5g28040 (Arabidopsis thaliana (Mouse-ear cress)).